The chain runs to 80 residues: Translation initiation factor IF-1 (80 aa).

One can recognise an S1-like domain in the interval 6–80 (EKRKKEESDV…TSRGRIVYRK (75 aa)).

This sequence belongs to the IF-1 family. As to quaternary structure, component of the 30S ribosomal translation pre-initiation complex which assembles on the 30S ribosome in the order IF-2 and IF-3, IF-1 and N-formylmethionyl-tRNA(fMet); mRNA recruitment can occur at any time during PIC assembly.

Its subcellular location is the cytoplasm. One of the essential components for the initiation of protein synthesis. Stabilizes the binding of IF-2 and IF-3 on the 30S subunit to which N-formylmethionyl-tRNA(fMet) subsequently binds. Helps modulate mRNA selection, yielding the 30S pre-initiation complex (PIC). Upon addition of the 50S ribosomal subunit IF-1, IF-2 and IF-3 are released leaving the mature 70S translation initiation complex. The sequence is that of Translation initiation factor IF-1 from Deinococcus geothermalis (strain DSM 11300 / CIP 105573 / AG-3a).